Consider the following 156-residue polypeptide: Myosin, essential light chain, adductor muscle (156 aa).

EF-hand domains lie at 6–43 (DEID…LGIN) and 81–116 (GTFA…LGER).

Functionally, in molluscan muscle, calcium regulation is associated with myosin rather than with actin. Muscle myosin contains two types of light chains: the catalytic light chain, essential for ATPase activity, and the regulatory light chain, a calcium-binding protein responsible for Ca(2+) dependent binding and Ca(2+) dependent Mg-ATPase activity. This Mizuhopecten yessoensis (Japanese scallop) protein is Myosin, essential light chain, adductor muscle.